The sequence spans 98 residues: MPFIYINILLAFFISFIGLLMYRSHLMSSLLCLEGMMLSLYILGTLLCLNMHFTLSAMIPMILLVFAACEAAVGLALLVMVSNTYGLDHVQNLNLLQC.

Helical transmembrane passes span Met1 to Met21, Ser29 to Leu49, and Met61 to Val81.

Belongs to the complex I subunit 4L family. As to quaternary structure, core subunit of respiratory chain NADH dehydrogenase (Complex I) which is composed of 45 different subunits.

Its subcellular location is the mitochondrion inner membrane. The enzyme catalyses a ubiquinone + NADH + 5 H(+)(in) = a ubiquinol + NAD(+) + 4 H(+)(out). Core subunit of the mitochondrial membrane respiratory chain NADH dehydrogenase (Complex I) which catalyzes electron transfer from NADH through the respiratory chain, using ubiquinone as an electron acceptor. Part of the enzyme membrane arm which is embedded in the lipid bilayer and involved in proton translocation. The sequence is that of NADH-ubiquinone oxidoreductase chain 4L (MT-ND4L) from Dugong dugon (Dugong).